Reading from the N-terminus, the 357-residue chain is Membrane-bound lytic murein transglycosylase C (357 aa).

Residues 1-15 (MKKYLLLALLPFLYA) form the signal peptide. The N-palmitoyl cysteine moiety is linked to residue Cys16. Cys16 carries the S-diacylglycerol cysteine lipid modification.

Belongs to the transglycosylase Slt family.

It localises to the cell outer membrane. It catalyses the reaction Exolytic cleavage of the (1-&gt;4)-beta-glycosidic linkage between N-acetylmuramic acid (MurNAc) and N-acetylglucosamine (GlcNAc) residues in peptidoglycan, from either the reducing or the non-reducing ends of the peptidoglycan chains, with concomitant formation of a 1,6-anhydrobond in the MurNAc residue.. Functionally, murein-degrading enzyme. May play a role in recycling of muropeptides during cell elongation and/or cell division. The polypeptide is Membrane-bound lytic murein transglycosylase C (Haemophilus influenzae (strain 86-028NP)).